Consider the following 360-residue polypeptide: Peptide chain release factor 1 (360 aa).

Position 235 is an N5-methylglutamine (Gln235).

It belongs to the prokaryotic/mitochondrial release factor family. Methylated by PrmC. Methylation increases the termination efficiency of RF1.

Its subcellular location is the cytoplasm. In terms of biological role, peptide chain release factor 1 directs the termination of translation in response to the peptide chain termination codons UAG and UAA. The sequence is that of Peptide chain release factor 1 from Burkholderia cenocepacia (strain HI2424).